We begin with the raw amino-acid sequence, 152 residues long: Large ribosomal subunit protein uL24 (152 aa).

The disordered stretch occupies residues 128–152; that stretch reads VVEEKETSKTSEGGGKTIEETEGEK.

This sequence belongs to the universal ribosomal protein uL24 family. Part of the 50S ribosomal subunit.

One of two assembly initiator proteins, it binds directly to the 5'-end of the 23S rRNA, where it nucleates assembly of the 50S subunit. Its function is as follows. Located at the polypeptide exit tunnel on the outside of the subunit. This Staphylothermus marinus (strain ATCC 43588 / DSM 3639 / JCM 9404 / F1) protein is Large ribosomal subunit protein uL24.